A 60-amino-acid chain; its full sequence is Large ribosomal subunit protein bL32 (60 aa).

This sequence belongs to the bacterial ribosomal protein bL32 family.

This Latilactobacillus sakei subsp. sakei (strain 23K) (Lactobacillus sakei subsp. sakei) protein is Large ribosomal subunit protein bL32.